The chain runs to 115 residues: Tyrosine-protein phosphatase 19 (115 aa).

The Tyrosine-protein phosphatase domain occupies 1 to 115 (WLMIVEQKCR…ETGSDAPMVV (115 aa)). Asp-83 contributes to the substrate binding site.

The protein belongs to the protein-tyrosine phosphatase family.

It catalyses the reaction O-phospho-L-tyrosyl-[protein] + H2O = L-tyrosyl-[protein] + phosphate. The sequence is that of Tyrosine-protein phosphatase 19 (STY-19) from Styela plicata (Wrinkled sea squirt).